The chain runs to 696 residues: Translation factor waclaw, mitochondrial (696 aa).

The N-terminal 76 residues, 1–76 (MIVGYSVFFH…RNLSTTNQVK (76 aa)), are a transit peptide targeting the mitochondrion. A tr-type G domain is found at 97 to 278 (ERIRNFSIIA…RVIETVPPPQ (182 aa)). Residues 106-113 (AHVDHGKS), 171-175 (DTPGH), and 225-228 (NKID) contribute to the GTP site.

The protein belongs to the TRAFAC class translation factor GTPase superfamily. Classic translation factor GTPase family. LepA subfamily.

It localises to the mitochondrion inner membrane. It catalyses the reaction GTP + H2O = GDP + phosphate + H(+). In terms of biological role, promotes mitochondrial protein synthesis. May act as a fidelity factor of the translation reaction, by catalyzing a one-codon backward translocation of tRNAs on improperly translocated ribosomes. Binds to mitochondrial ribosomes in a GTP-dependent manner. In Drosophila melanogaster (Fruit fly), this protein is Translation factor waclaw, mitochondrial.